Consider the following 399-residue polypeptide: Succinate--CoA ligase [ADP-forming] subunit beta (399 aa).

Positions 9–254 constitute an ATP-grasp domain; sequence KELLAKYGIG…ETEEDPAEVE (246 aa). Residues Lys46, 53–55, Val112, and Glu117 contribute to the ATP site; that span reads GRG. Mg(2+)-binding residues include Asn209 and Asp223. Residues Asn274 and 331–333 contribute to the substrate site; that span reads GIM.

The protein belongs to the succinate/malate CoA ligase beta subunit family. In terms of assembly, heterotetramer of two alpha and two beta subunits. Requires Mg(2+) as cofactor.

The catalysed reaction is succinate + ATP + CoA = succinyl-CoA + ADP + phosphate. It carries out the reaction GTP + succinate + CoA = succinyl-CoA + GDP + phosphate. It participates in carbohydrate metabolism; tricarboxylic acid cycle; succinate from succinyl-CoA (ligase route): step 1/1. Its function is as follows. Succinyl-CoA synthetase functions in the citric acid cycle (TCA), coupling the hydrolysis of succinyl-CoA to the synthesis of either ATP or GTP and thus represents the only step of substrate-level phosphorylation in the TCA. The beta subunit provides nucleotide specificity of the enzyme and binds the substrate succinate, while the binding sites for coenzyme A and phosphate are found in the alpha subunit. This chain is Succinate--CoA ligase [ADP-forming] subunit beta, found in Erythrobacter litoralis (strain HTCC2594).